Here is a 199-residue protein sequence, read N- to C-terminus: Homeobox protein ceh-19 (199 aa).

Residues 1–42 (MAFNIESLLEKKSNPVEEGNDFEEENDSEKNGEEDEEEEEKN) form a disordered region. Acidic residues predominate over residues 18–40 (EGNDFEEENDSEKNGEEDEEEEE). The homeobox DNA-binding region spans 94–153 (ERKPRQAYSARQLDRLETEFQTDKYLSVNKRIQLSQTLNLTETQIKTWFQNRRTKWKKQL).

The protein resides in the nucleus. Functionally, probable transcription factor. Required for MC motor neuron differentiation and function, including role in modulating pharyngeal pumping. Regulates gene expression of FMRFamide-like neuropeptide flp-2 in MC motor neurons. May act downstream of transcription factor pha-4. In Caenorhabditis elegans, this protein is Homeobox protein ceh-19 (ceh-19).